The following is a 253-amino-acid chain: Complement C1q subcomponent subunit B (253 aa).

The first 25 residues, 1 to 25, serve as a signal peptide directing secretion; that stretch reads MKTQWSEILTPLLLLLLGLLHVSWA. Gln26 is subject to Pyrrolidone carboxylic acid. Residues 29–112 form the Collagen-like domain; it reads CTGSPGIPGV…GPRGPKGGSG (84 aa). The tract at residues 29-114 is disordered; that stretch reads CTGSPGIPGV…RGPKGGSGDY (86 aa). Residues Pro33, Pro36, Pro39, Pro51, and Pro54 each carry the 4-hydroxyproline modification. 5-hydroxylysine is present on residues Lys57 and Lys60. Pro63 is subject to 4-hydroxyproline. Over residues 68–77 the composition is skewed to basic and acidic residues; it reads DHGELGEKGD. Lys75 is subject to 5-hydroxylysine. Over residues 78-96 the composition is skewed to low complexity; that stretch reads AGIPGIPGKVGPKGPVGPK. Residues Pro81 and Pro84 each carry the 4-hydroxyproline modification. 2 positions are modified to 5-hydroxylysine: Lys90 and Lys96. 4-hydroxyproline is present on residues Pro99 and Pro102. The residue at position 108 (Lys108) is a 5-hydroxylysine. The C1q domain occupies 115 to 253; sequence KATQKVAFSA…GFLLFPDMDV (139 aa). The cysteines at positions 179 and 198 are disulfide-linked. Asp199, Tyr200, and Gln206 together coordinate Ca(2+).

In terms of assembly, core component of the complement C1 complex, a calcium-dependent complex composed of 1 molecule of the C1Q subcomplex, 2 molecules of C1R and 2 molecules of C1S. The C1Q subcomplex is composed 18 subunits: 3 chains of C1QA, C1QB, and C1QC trimerize to form 6 collagen-like triple helices connected to six globular ligand-recognition modules (C1q domain). Hydroxylated on lysine and proline residues. Hydroxylated lysine residues can be glycosylated. Human C1Q contains up to 68.3 hydroxylysine-galactosylglucose residues and up to 2.5 hydroxylysine-galactose per molecule. Total percentage hydroxylysine residues glycosylated is 86.4%. As to expression, highest levels in spleen, lung and brain. Weaker expression in kidney and liver. In the spleen, localized mainly to the red pulp, in cells mainly of monocyte-macrophage lineage. In white pulp, localized in specific dendritic cells such as those from the periarteriolar lymphatic sheath (PALS).

It is found in the secreted. The protein resides in the cell surface. With respect to regulation, the C1Q subcomplex is inhibited by sulfated molecules, such as triterpenoid sulfates, heparan sulfate, or chondroitin sulfates. Its function is as follows. Core component of the complement C1 complex, a multiprotein complex that initiates the classical pathway of the complement system, a cascade of proteins that leads to phagocytosis and breakdown of pathogens and signaling that strengthens the adaptive immune system. The classical complement pathway is initiated by the C1Q subcomplex of the C1 complex, which specifically binds IgG or IgM immunoglobulins complexed with antigens, forming antigen-antibody complexes on the surface of pathogens: C1QA, together with C1QB and C1QC, specifically recognizes and binds the Fc regions of IgG or IgM via its C1q domain. Immunoglobulin-binding activates the proenzyme C1R, which cleaves C1S, initiating the proteolytic cascade of the complement system. The C1Q subcomplex is activated by a hexamer of IgG complexed with antigens, while it is activated by a pentameric IgM. The C1Q subcomplex also recognizes and binds phosphatidylserine exposed on the surface of cells undergoing programmed cell death, possibly promoting activation of the complement system. The protein is Complement C1q subcomponent subunit B of Rattus norvegicus (Rat).